Consider the following 143-residue polypeptide: Large ribosomal subunit protein uL11 (143 aa).

It belongs to the universal ribosomal protein uL11 family. As to quaternary structure, part of the ribosomal stalk of the 50S ribosomal subunit. Interacts with L10 and the large rRNA to form the base of the stalk. L10 forms an elongated spine to which L12 dimers bind in a sequential fashion forming a multimeric L10(L12)X complex. Post-translationally, one or more lysine residues are methylated.

In terms of biological role, forms part of the ribosomal stalk which helps the ribosome interact with GTP-bound translation factors. This Zymomonas mobilis subsp. mobilis (strain ATCC 31821 / ZM4 / CP4) protein is Large ribosomal subunit protein uL11.